Reading from the N-terminus, the 211-residue chain is MARGKIQLKRIENPVHRQVTFCKRRTGLLKKAKELSVLCDAEIGVVIFSPQGKLFELATKGTMEGMIDKYMKCTGGGRGSSSATFTAQEQLQPPNLDPKDEINVLKQEIEMLQKGISYMFGGGDGAMNLEELLLLEKHLEYWISQIRSAKMDVMLQEIQSLRNKEGVLKNTNKYLLEKIEENNNSILDANFAVMETNYSYPLTMPSEIFQF.

An MADS-box domain is found at 3-57; the sequence is RGKIQLKRIENPVHRQVTFCKRRTGLLKKAKELSVLCDAEIGVVIFSPQGKLFEL. One can recognise a K-box domain in the interval 95–185; the sequence is NLDPKDEINV…LEKIEENNNS (91 aa).

In terms of tissue distribution, preferentially expressed in roots. In root meristem, expressed in external cells of columella, lateral root cap and atrichoblasts. In mature root, expressed in the central cylinder. Expressed in leaf vasculature, young floral meristems and nectaries.

The protein resides in the nucleus. Probable transcription activator that regulates root development by controlling cell proliferation in root meristem. May mediate responses to auxin in the root. May act as promoter of the flowering transition through up-regulation of SOC, FT and LFY. The protein is Agamous-like MADS-box protein AGL12 of Arabidopsis thaliana (Mouse-ear cress).